We begin with the raw amino-acid sequence, 494 residues long: Gabija protein GajB (494 aa).

Residues 1-229 enclose the UvrD-like helicase ATP-binding domain; that stretch reads MSREQIIKDG…YHLTSNFRCC (229 aa). 17–24 provides a ligand contact to ATP; the sequence is AGAGSGKT.

This sequence belongs to the helicase family. Homodimer. Interacts with GajA; 2 GajB dimers dock at opposite sides of the GajA complex to form a 4:4 GajA-GajB assembly (GajAB). GajAB interacts with Bacillus phage Phi3T Gad1 protein; this interaction forms a 4:4:8 GajAB-Gad1 complex and leads to GajAB inhibition.

Component of antiviral defense system Gabija type I, composed of GajA and GajB. Expression of Gabija type I in B.subtilis (strain BEST7003) confers resistance to phages phi105, phi29, rho14, SpBeta and SBSphiC. Expression of Gabija type I in E.coli B (strain ATCC 11303) confers resistance to phage T7. May be a helicase or contribute to GajA activation. This is Gabija protein GajB from Bacillus cereus (strain VD045).